A 141-amino-acid polypeptide reads, in one-letter code: Nucleoside diphosphate kinase (141 aa).

Residues K11, F59, R87, T93, R104, and N114 each coordinate ATP. The active-site Pros-phosphohistidine intermediate is H117.

It belongs to the NDK family. As to quaternary structure, homotetramer. Mg(2+) serves as cofactor.

Its subcellular location is the cytoplasm. It catalyses the reaction a 2'-deoxyribonucleoside 5'-diphosphate + ATP = a 2'-deoxyribonucleoside 5'-triphosphate + ADP. The catalysed reaction is a ribonucleoside 5'-diphosphate + ATP = a ribonucleoside 5'-triphosphate + ADP. Functionally, major role in the synthesis of nucleoside triphosphates other than ATP. The ATP gamma phosphate is transferred to the NDP beta phosphate via a ping-pong mechanism, using a phosphorylated active-site intermediate. The sequence is that of Nucleoside diphosphate kinase from Stenotrophomonas maltophilia (strain R551-3).